A 248-amino-acid chain; its full sequence is Probable ATP-dependent transporter SufC (248 aa).

The ABC transporter domain occupies 2–246 (LSIKDLHVSV…EEQGYGWLTE (245 aa)). 34–41 (GPNGSGKS) is a binding site for ATP.

The protein belongs to the ABC transporter superfamily. Ycf16 family. As to quaternary structure, part of the SufBCD complex that contains SufB, SufC and SufD. Interacts directly with SufB and SufD. Interacts with SufA.

Its subcellular location is the cytoplasm. Its function is as follows. Has low ATPase activity. The SufBCD complex acts synergistically with SufE to stimulate the cysteine desulfurase activity of SufS. The SufBCD complex contributes to the assembly or repair of oxygen-labile iron-sulfur clusters under oxidative stress. May facilitate iron uptake from extracellular iron chelators under iron limitation. The protein is Probable ATP-dependent transporter SufC (sufC) of Escherichia coli (strain K12).